The primary structure comprises 354 residues: C-C chemokine receptor type 5 (354 aa).

Over 1-32 (MDFQGSIPTYIYDIDYSMSAPCQKVNVKQIAA) the chain is Extracellular. The O-linked (GalNAc...) serine glycan is linked to Ser6. Tyr10 and Tyr16 each carry sulfotyrosine. 2 disulfide bridges follow: Cys22–Cys271 and Cys103–Cys180. The helical transmembrane segment at 33–60 (QLLPPLYSLVFIFGFVGNMMVFLILISC) threads the bilayer. The Cytoplasmic segment spans residues 61 to 70 (KKLKSMTDIY). The chain crosses the membrane as a helical span at residues 71-91 (LFNLAISDLLFLLTLPFWAHY). The Extracellular portion of the chain corresponds to 92 to 104 (AANEWVFGNIMCK). Residues 105 to 126 (LFTGIYHIGYFGGIFFIILLTI) traverse the membrane as a helical segment. The Cytoplasmic segment spans residues 127–143 (DRYLAIVHAVFAIKART). The chain crosses the membrane as a helical span at residues 144-168 (VNFGVITSVVTWVVAVFVSLPEIIF). Residues 169 to 200 (MRSQKEGSHYTCSPHFLHIQYRFWKHFQTLKM) lie on the Extracellular side of the membrane. The helical transmembrane segment at 201–220 (VILSLILPLLVMVICYSGIL) threads the bilayer. Topologically, residues 221-237 (NTLFRCRNEKKRHRAVR) are cytoplasmic. The helical transmembrane segment at 238–262 (LIFAIMIVYFLFWTPYNIVLLLTTF) threads the bilayer. Residues 263–279 (QEYFGLNNCSSSNRLDQ) lie on the Extracellular side of the membrane. A helical transmembrane segment spans residues 280 to 303 (AMQVTETLGMTHCCLNPVIYAFVG). The Cytoplasmic portion of the chain corresponds to 304 to 354 (EKFRNYLSVFFRKHIVKRFCKHCSIFQQVNPDRVSSVYTRSTGEQEVSTGL). Residues Cys323 and Cys326 are each lipidated (S-palmitoyl cysteine). Phosphoserine; by BARK1 occurs at positions 338, 339, 344, and 351.

This sequence belongs to the G-protein coupled receptor 1 family. Interacts with PRAF2. Efficient ligand binding to CCL3/MIP-1alpha and CCL4/MIP-1beta requires sulfation, O-glycosylation and sialic acid modifications. Glycosylation on Ser-6 is required for efficient binding of CCL4. Interacts with GRK2. Interacts with ARRB1 and ARRB2. Interacts with CNIH4. Interacts with S100A4; this interaction stimulates T-lymphocyte chemotaxis. Post-translationally, sulfated on at least 2 of the N-terminal tyrosines. Sulfation is required for efficient binding of the chemokines, CCL3 and CCL4. In terms of processing, O-glycosylated, but not N-glycosylated. Ser-6 appears to be the major site. Also sialylated glycans present which contribute to chemokine binding. Ser-17 may also be glycosylated and, if so, with small moieties such as a T-antigen. Palmitoylation in the C-terminal is important for cell surface expression. Post-translationally, phosphorylation on serine residues in the C-terminal is stimulated by binding CC chemokines especially by APO-RANTES.

The protein localises to the cell membrane. Its function is as follows. Receptor for a number of inflammatory CC-chemokines including CCL3/MIP-1-alpha, CCL4/MIP-1-beta and RANTES and subsequently transduces a signal by increasing the intracellular calcium ion level. May play a role in the control of granulocytic lineage proliferation or differentiation. Participates in T-lymphocyte migration to the infection site by acting as a chemotactic receptor. The protein is C-C chemokine receptor type 5 (Ccr5) of Rattus norvegicus (Rat).